A 315-amino-acid chain; its full sequence is tRNA dimethylallyltransferase (315 aa).

10–17 (GPTASGKS) provides a ligand contact to ATP. 12–17 (TASGKS) contacts substrate. Residues 35-38 (DSMQ) form an interaction with substrate tRNA region.

The protein belongs to the IPP transferase family. In terms of assembly, monomer. It depends on Mg(2+) as a cofactor.

It catalyses the reaction adenosine(37) in tRNA + dimethylallyl diphosphate = N(6)-dimethylallyladenosine(37) in tRNA + diphosphate. Functionally, catalyzes the transfer of a dimethylallyl group onto the adenine at position 37 in tRNAs that read codons beginning with uridine, leading to the formation of N6-(dimethylallyl)adenosine (i(6)A). In Thermoanaerobacter pseudethanolicus (strain ATCC 33223 / 39E) (Clostridium thermohydrosulfuricum), this protein is tRNA dimethylallyltransferase.